A 430-amino-acid polypeptide reads, in one-letter code: Uric acid permease PucK (430 aa).

The next 14 helical transmembrane spans lie at 18-38, 43-63, 67-87, 97-117, 122-142, 163-183, 185-205, 209-229, 233-253, 274-294, 310-330, 333-353, 369-389, and 398-418; these read MLAM…AIGL, LTYL…LQLW, YFGI…GPMI, AIYG…GFFG, FFPP…LIPT, LLGF…KGFI, SIAI…MGKV, EVLE…PPTF, AVVT…GVYF, AEGL…TAFS, VIAI…AAAL, VIPT…VISY, LLII…PALF, and VLAG…HAFF.

It belongs to the nucleobase:cation symporter-2 (NCS2) (TC 2.A.40) family.

It localises to the cell membrane. Its function is as follows. Uptake of uric acid. This Bacillus subtilis (strain 168) protein is Uric acid permease PucK (pucK).